A 943-amino-acid polypeptide reads, in one-letter code: Synaptotagmin-like protein 2 (943 aa).

The RabBD domain occupies 1-57 (MIDLSFLTEEEQEAIMKVLQRDAALKRAEEERVRHLPEKVKDDQQLKNMSGQWFYEA). Disordered regions lie at residues 77 to 99 (RKKR…KESW), 118 to 291 (EEPE…VRFH), and 361 to 613 (ESDR…SNSG). Over residues 82–99 (QVADEQSKDRANRAKESW) the composition is skewed to basic and acidic residues. A compositionally biased stretch (low complexity) spans 125–138 (APASPSSSVVNPVS). Over residues 174–192 (SQQTKNEQSKNGKTGLFQT) the composition is skewed to polar residues. The span at 194–205 (KEGELSESKEES) shows a compositional bias: basic and acidic residues. 3 stretches are compositionally biased toward polar residues: residues 382-394 (PQPS…LPFQ), 404-416 (KNET…SGSF), and 426-440 (EFLT…NSHT). The span at 524-537 (ELVRSAEDDQKADQ) shows a compositional bias: basic and acidic residues. Positions 549–560 (STVSSQPDNQFS) are enriched in polar residues. Positions 603–613 (SSLTNLSSNSG) are enriched in low complexity. C2 domains lie at 637–762 (VKGS…LKWY) and 777–906 (NRGE…VDWM).

In terms of assembly, monomer. Binds NRXN1. Binds RAB27A that has been activated by GTP-binding via its N-terminus. Interacts with RAB27B.

The protein localises to the cell membrane. May act as a RAB27A effector protein and play a role in cytotoxic granule exocytosis in lymphocytes. This is Synaptotagmin-like protein 2 (SYTL2) from Bos taurus (Bovine).